The chain runs to 525 residues: Glucose-6-phosphate isomerase (525 aa).

The Proton donor role is filled by Glu-356. Residues His-387 and Lys-502 contribute to the active site.

Belongs to the GPI family.

The protein resides in the cytoplasm. The catalysed reaction is alpha-D-glucose 6-phosphate = beta-D-fructose 6-phosphate. The protein operates within carbohydrate biosynthesis; gluconeogenesis. It functions in the pathway carbohydrate degradation; glycolysis; D-glyceraldehyde 3-phosphate and glycerone phosphate from D-glucose: step 2/4. Catalyzes the reversible isomerization of glucose-6-phosphate to fructose-6-phosphate. This chain is Glucose-6-phosphate isomerase, found in Treponema denticola (strain ATCC 35405 / DSM 14222 / CIP 103919 / JCM 8153 / KCTC 15104).